The chain runs to 100 residues: MAKKSLIQREMKRRILNRKYSSLRKFLREKIDKVSSLDERWKIRKNLQSLPRNSAPSRQRRRCFITGRSRANYRDFGLSRHLLREMAHSCLLPGITKSSW.

It belongs to the universal ribosomal protein uS14 family. In terms of assembly, part of the 30S ribosomal subunit.

The protein resides in the plastid. Binds 16S rRNA, required for the assembly of 30S particles. In Aneura mirabilis (Parasitic liverwort), this protein is Small ribosomal subunit protein uS14c.